The chain runs to 1110 residues: MTACTFLAGGLRDPGLCGPTRWAPSPPGLPPIPPRPRLRLRPPLLLLLLLPRSVLSAVFTVGVLGPWACDPIFARARPDLAARLAASRLNHAAALEGGPRFEVALLPEPCRTPGSLGAVSSALTRVSGLVGPVNPAACRPAELLAQEAGVALVPWGCPGTRAAGTTAPVVTPAADALYALLRAFRWAHVALVTAPQDLWVEAGHALSTALRARGLPVALVTSMEPSDLSGAREALRRVQDGPRVRAVIMVMHSVLLGGEEQRCLLEAAEELGLADGSLVFLPFDTLHYALSPGPDALAVLANSSQLRKAHDAVLTLTRHCPLGGSVRDSLRRAQEHRELPLDLNLQQVSPLFGTIYDSVFLLAGGVARARVAAGGGWVSGAAVARHIRDARVPGFCGALGGAEEPSFVLLDTDATGDQLFATYVLDPTQGFFHSAGTPVHFPKGGRGPGPDPSCWFDPDTICNGGVEPSVVFIGFLLVVGMGLAGAFLAHYCRHRLLHIQMVSGPNKIILTLDDITFLHPHGGNSRKVAQGSRTSLAARSISDVRSIHSQLPDYTNIGLYEGDWVWLKKFPGDRHIAIRPATKMAFSKIRELRHENVALYLGLFLAGGAGGPAAPGEGVLAVVSEHCARGSLQDLLAQRDIKLDWMFKSSLLLDLIKGIRYLHHRGVAHGRLKSRNCVVDGRFVLKVTDHGHGRLLEAQRVLPEPPSAEDQLWTAPELLRDPVLERRGTLAGDVFSLGIIMQEVVCRSAPYAMLELTPEEVVKRVQSPPPLCRPSVSIDQAPMECIQLMKQCWAEQPELRPSMDRTFELFKSINKGRKMNIIDSMLRMLEQYSSNLEDLIRERTEELELEKQKTDRLLTQMLPPSVAEALKMGTPVEPEYFEEVTLYFSDIVGFTTISAMSEPIEVVDLLNDLYTLFDAIIGSHDVYKVETIGDAYMVASGLPQRNGHRHAAEIANMALDILSAVGTFRMRHMPEVPVRIRIGLHSGPCVAGVVGLTMPRYCLFGDTVNTASAMESTGLPYRIHVNRSTVQILSALNEGFLTEVRGRTELKGKGAEETYWLVGRRGFNKPIPKPPDLQPGASNHGISLHEIPPDRRQKLEKARPGQFSGK.

A signal peptide spans Met1–Ser56. Residues Ala57–Glu467 lie on the Extracellular side of the membrane. Asn302 carries an N-linked (GlcNAc...) asparagine glycan. A helical transmembrane segment spans residues Pro468 to Cys492. One can recognise a Protein kinase domain in the interval Arg493–Ile813. Residues Arg493–Lys1110 are Cytoplasmic-facing. Residues Thr885–Glu1015 enclose the Guanylate cyclase domain. The disordered stretch occupies residues Pro1070–Lys1110. Over residues Ile1091–Arg1103 the composition is skewed to basic and acidic residues.

The protein belongs to the adenylyl cyclase class-4/guanylyl cyclase family. As to quaternary structure, homodimer; requires homodimerization for guanylyl cyclase activity. Interacts (via C-terminus) with RD3 (via C-terminus); promotes the exit of GUCY2D from the endoplasmic reticulum and its trafficking to the photoreceptor outer segments. Interaction with RD3 negatively regulates GUCY2D guanylate cyclase activity. As to expression, expressed in the retina in rod outer segment.

Its subcellular location is the photoreceptor outer segment membrane. It localises to the endoplasmic reticulum membrane. It catalyses the reaction GTP = 3',5'-cyclic GMP + diphosphate. Activated by GUCA1A when free calcium ions concentration is low, and inhibited by GUCA1A when free calcium ions concentration is high. Negatively regulated by RD3; inhibits the basal and GUCA1A-stimulated guanylate cyclase activity. Its function is as follows. Catalyzes the synthesis of cyclic GMP (cGMP) in rods and cones of photoreceptors. Plays an essential role in phototransduction, by mediating cGMP replenishment. May also participate in the trafficking of membrane-asociated proteins to the photoreceptor outer segment membrane. This is Retinal guanylyl cyclase 1 (GUCY2D) from Bos taurus (Bovine).